The sequence spans 394 residues: HORMA domain-containing protein 1 (394 aa).

The 203-residue stretch at 24 to 226 (HQSLVLVKRL…TPFHIFKVKV (203 aa)) folds into the HORMA domain. The disordered stretch occupies residues 252-394 (KILRDKDVED…RKFSEPKEHI (143 aa)). Residues 253–282 (ILRDKDVEDEQEHYTSDDLDMETKMEEQEK) are compositionally biased toward basic and acidic residues. Polar residues-rich tracts occupy residues 310 to 324 (LSIS…VNKT) and 343 to 352 (KMANGNQPVK). Residues 362–374 (QHESGRRVLHHFD) show a composition bias toward basic and acidic residues. Phosphoserine is present on S376. A Nuclear localization signal motif is present at residues 383–386 (KRRK).

Interacts with HORMAD2. Interacts with IHO1. In terms of processing, phosphorylated at Ser-377 in a SPO11-dependent manner.

It localises to the nucleus. Its subcellular location is the chromosome. Plays a key role in meiotic progression. Regulates 3 different functions during meiosis: ensures that sufficient numbers of processed DNA double-strand breaks (DSBs) are available for successful homology search by increasing the steady-state numbers of single-stranded DSB ends. Promotes synaptonemal-complex formation independently of its role in homology search. Plays a key role in the male mid-pachytene checkpoint and the female meiotic prophase checkpoint: required for efficient build-up of ATR activity on unsynapsed chromosome regions, a process believed to form the basis of meiotic silencing of unsynapsed chromatin (MSUC) and meiotic prophase quality control in both sexes. The chain is HORMA domain-containing protein 1 (HORMAD1) from Macaca fascicularis (Crab-eating macaque).